Here is a 391-residue protein sequence, read N- to C-terminus: cAMP-dependent protein kinase regulatory subunit (391 aa).

The disordered stretch occupies residues 1-84 (MFKSPFGANA…PPNPESYPAQ (84 aa)). Residues 1 to 131 (MFKSPFGANA…RLKTAIAGNF (131 aa)) form a dimerization and phosphorylation region. Positions 38-55 (TVTSPTSPNFGMNAQSMF) are enriched in polar residues. Phosphoserine is present on serine 92. Residues 132 to 261 (LFSH…FLRE), glutamate 210, arginine 219, 264 to 381 (LLQT…DIKT), glutamate 331, and arginine 340 each bind 3',5'-cyclic AMP.

Belongs to the cAMP-dependent kinase regulatory chain family. In terms of assembly, tetramer, composed of 2 regulatory (R) and 2 catalytic (C) subunits. In the presence of cAMP it dissociates into 2 active monomeric C subunits and an R dimer.

In Colletotrichum orbiculare (strain 104-T / ATCC 96160 / CBS 514.97 / LARS 414 / MAFF 240422) (Cucumber anthracnose fungus), this protein is cAMP-dependent protein kinase regulatory subunit (PKAR).